Consider the following 243-residue polypeptide: Biosynthetic peptidoglycan transglycosylase (243 aa).

The chain crosses the membrane as a helical span at residues 21 to 43; that stretch reads LLIVSLVSALMSVLQVIVFRFVD.

This sequence belongs to the glycosyltransferase 51 family.

The protein resides in the cell inner membrane. The enzyme catalyses [GlcNAc-(1-&gt;4)-Mur2Ac(oyl-L-Ala-gamma-D-Glu-L-Lys-D-Ala-D-Ala)](n)-di-trans,octa-cis-undecaprenyl diphosphate + beta-D-GlcNAc-(1-&gt;4)-Mur2Ac(oyl-L-Ala-gamma-D-Glu-L-Lys-D-Ala-D-Ala)-di-trans,octa-cis-undecaprenyl diphosphate = [GlcNAc-(1-&gt;4)-Mur2Ac(oyl-L-Ala-gamma-D-Glu-L-Lys-D-Ala-D-Ala)](n+1)-di-trans,octa-cis-undecaprenyl diphosphate + di-trans,octa-cis-undecaprenyl diphosphate + H(+). The protein operates within cell wall biogenesis; peptidoglycan biosynthesis. Functionally, peptidoglycan polymerase that catalyzes glycan chain elongation from lipid-linked precursors. This is Biosynthetic peptidoglycan transglycosylase from Xylella fastidiosa (strain Temecula1 / ATCC 700964).